The following is a 704-amino-acid chain: DNA ligase (704 aa).

Residues 58–62, 107–108, and glutamate 138 each bind NAD(+); these read DYEYD and SL. Lysine 140 serves as the catalytic N6-AMP-lysine intermediate. Residues arginine 161, glutamate 199, lysine 323, and lysine 347 each coordinate NAD(+). Positions 441, 444, 459, and 464 each coordinate Zn(2+). The BRCT domain occupies 621–704; sequence EKKGKLAGLN…LKLIGGENTE (84 aa).

It belongs to the NAD-dependent DNA ligase family. LigA subfamily. The cofactor is Mg(2+). Mn(2+) is required as a cofactor.

The catalysed reaction is NAD(+) + (deoxyribonucleotide)n-3'-hydroxyl + 5'-phospho-(deoxyribonucleotide)m = (deoxyribonucleotide)n+m + AMP + beta-nicotinamide D-nucleotide.. Functionally, DNA ligase that catalyzes the formation of phosphodiester linkages between 5'-phosphoryl and 3'-hydroxyl groups in double-stranded DNA using NAD as a coenzyme and as the energy source for the reaction. It is essential for DNA replication and repair of damaged DNA. In Sulfurihydrogenibium sp. (strain YO3AOP1), this protein is DNA ligase.